Reading from the N-terminus, the 255-residue chain is Tablysin 15 (255 aa).

The first 23 residues, 1–23, serve as a signal peptide directing secretion; the sequence is MTSIPVSSFLLAALVLQYATSDA. Intrachain disulfides connect Cys-27–Cys-40, Cys-31–Cys-117, and Cys-49–Cys-110. Residues 32–34 carry the Cell attachment site motif; that stretch reads RGD. One can recognise an SCP domain in the interval 67 to 211; sequence LSKINDVRDH…KARALLTCNF (145 aa). Leukotriene E4 contacts are provided by Trp-82, His-153, and Lys-156. Intrachain disulfides connect Cys-192/Cys-209 and Cys-232/Cys-243.

It belongs to the CRISP family. In terms of tissue distribution, expressed in salivary glands.

The protein resides in the secreted. Anti-inflammatory scavenger of eicosanoids and antithrombotic protein that inhibits platelets aggregation induced by collagen, ADP and convulxin (GPVI agonist). Exhibits high affinity binding for glycoprotein IIb-IIIa receptor (ITGA2B/ITGB3) and endothelial cell alphaVbeta3 (ITGAV/ITGB3) integrins, but not for alpha-5/beta-1 or alpha-2/beta-1. Accordingly, it blocks endothelial cell adhesion to vitronectin (IC(50)~1 nM) and marginally to fibronectin (IC(50)~1 uM), but not to collagen. It also inhibits fibroblast growth factor (FGF)-induced endothelial cell proliferation, and attenuates tube formation in vitro. In addition, it dose-dependently attenuates thrombus formation to collagen under flow. Also binds proinflammatory cysteinyl leukotrienes (leukotrienes C4 (LTC4), D4 (LTD4) and E4 (LTE4)) with submicromolar affinities. The sequence is that of Tablysin 15 from Tabanus yao (Horsefly).